The primary structure comprises 274 residues: Ceramide synthase (274 aa).

A TLC domain is found at 34-261; the sequence is ADAVIVSARL…ICRGACRLFW (228 aa). The next 4 helical transmembrane spans lie at 130-150, 159-179, 194-214, and 223-243; these read FLMVLHHAAMVLVCFPLSVVW, LGCMLMAEVSTPFVCLGKILI, ALMLLSFLCCRVLLFPYLYWA, and LLAVPLAIPAHVNLGAALLLA.

In terms of tissue distribution, expressed in testis. Expressed in the retina with higher expression levels in the macular than in the peripheral region.

The protein localises to the golgi apparatus membrane. It is found in the endoplasmic reticulum membrane. It catalyses the reaction sphing-4-enine + octadecanoyl-CoA = N-octadecanoylsphing-4-enine + CoA + H(+). It carries out the reaction eicosanoyl-CoA + sphing-4-enine = N-eicosanoyl-sphing-4-enine + CoA + H(+). The catalysed reaction is sphing-4-enine + hexadecanoyl-CoA = N-hexadecanoylsphing-4-enine + CoA + H(+). Its function is as follows. Involved in ceramide synthesis. This Homo sapiens (Human) protein is Ceramide synthase.